The chain runs to 790 residues: Lon protease (790 aa).

Positions 13–209 (LPLFPIRNTV…RLTDHVAKEI (197 aa)) constitute a Lon N-terminal domain. 362–369 (GPPGVGKT) is a binding site for ATP. Positions 598–779 (DNQVGITIGL…DQVLDIALAT (182 aa)) constitute a Lon proteolytic domain. Active-site residues include Ser-685 and Lys-728.

The protein belongs to the peptidase S16 family. Homohexamer. Organized in a ring with a central cavity.

It is found in the cytoplasm. The enzyme catalyses Hydrolysis of proteins in presence of ATP.. Its function is as follows. ATP-dependent serine protease that mediates the selective degradation of mutant and abnormal proteins as well as certain short-lived regulatory proteins. Required for cellular homeostasis and for survival from DNA damage and developmental changes induced by stress. Degrades polypeptides processively to yield small peptide fragments that are 5 to 10 amino acids long. Binds to DNA in a double-stranded, site-specific manner. The chain is Lon protease from Orientia tsutsugamushi (strain Ikeda) (Rickettsia tsutsugamushi).